The sequence spans 120 residues: Spermidine export protein MdtJ (120 aa).

4 consecutive transmembrane segments (helical) span residues 1–21 (MFYW…TLSM), 31–51 (TGFI…AFAV), 54–74 (IALG…ITLF), and 81–101 (ESLS…IVLI).

The protein belongs to the drug/metabolite transporter (DMT) superfamily. Small multidrug resistance (SMR) (TC 2.A.7.1) family. MdtJ subfamily. In terms of assembly, forms a complex with MdtI.

It is found in the cell inner membrane. Catalyzes the excretion of spermidine. This chain is Spermidine export protein MdtJ, found in Klebsiella pneumoniae subsp. pneumoniae (strain ATCC 700721 / MGH 78578).